The primary structure comprises 200 residues: Protein GrpE (200 aa).

Residues 1 to 27 show a composition bias toward basic and acidic residues; that stretch reads MTKQEKAENQEKPTEETVEETPKKETP. The segment at 1–50 is disordered; the sequence is MTKQEKAENQEKPTEETVEETPKKETPFEPVMEADEVEETTEAQAPVEEA. Over residues 32-41 the composition is skewed to acidic residues; that stretch reads MEADEVEETT.

This sequence belongs to the GrpE family. As to quaternary structure, homodimer.

It is found in the cytoplasm. Functionally, participates actively in the response to hyperosmotic and heat shock by preventing the aggregation of stress-denatured proteins, in association with DnaK and GrpE. It is the nucleotide exchange factor for DnaK and may function as a thermosensor. Unfolded proteins bind initially to DnaJ; upon interaction with the DnaJ-bound protein, DnaK hydrolyzes its bound ATP, resulting in the formation of a stable complex. GrpE releases ADP from DnaK; ATP binding to DnaK triggers the release of the substrate protein, thus completing the reaction cycle. Several rounds of ATP-dependent interactions between DnaJ, DnaK and GrpE are required for fully efficient folding. The polypeptide is Protein GrpE (Latilactobacillus sakei subsp. sakei (strain 23K) (Lactobacillus sakei subsp. sakei)).